Consider the following 362-residue polypeptide: F-box protein At1g54550 (362 aa).

One can recognise an F-box domain in the interval 1-47 (MATVTDLPDDLVREIFSRVPLTSLRAVRSTCKKWNAISKYDILGKKA).

The sequence is that of F-box protein At1g54550 from Arabidopsis thaliana (Mouse-ear cress).